The following is a 211-amino-acid chain: Arginine exporter protein ArgO (211 aa).

The Cytoplasmic segment spans residues M1 to M38. A helical transmembrane segment spans residues I39–G58. The Periplasmic portion of the chain corresponds to S59–M63. The chain crosses the membrane as a helical span at residues Q64–A91. Residues M92–E102 lie on the Cytoplasmic side of the membrane. Residues V103–F130 form a helical membrane-spanning segment. Topologically, residues V131–L140 are periplasmic. A helical membrane pass occupies residues D141–L170. Topologically, residues A171 to R173 are cytoplasmic. A helical transmembrane segment spans residues L174 to R200. The Periplasmic segment spans residues D201–S211.

This sequence belongs to the LysE/ArgO transporter (TC 2.A.75) family. In terms of assembly, monomer.

The protein localises to the cell inner membrane. It carries out the reaction L-arginine(in) = L-arginine(out). Its function is as follows. Involved in the export of arginine. Important to control the intracellular level of arginine and the correct balance between arginine and lysine. May also be involved in the export of canavanine (a plant-derived antimetabolite). In Escherichia coli (strain K12), this protein is Arginine exporter protein ArgO.